Reading from the N-terminus, the 137-residue chain is Large ribosomal subunit protein uL16c (137 aa).

This sequence belongs to the universal ribosomal protein uL16 family. In terms of assembly, part of the 50S ribosomal subunit.

It is found in the plastid. In Helicosporidium sp. subsp. Simulium jonesii (Green alga), this protein is Large ribosomal subunit protein uL16c (rpl16).